We begin with the raw amino-acid sequence, 555 residues long: T-complex protein 1 subunit gamma (555 aa).

The tract at residues 527–555 (KKKQAPGSGPSKPTIETEGDADNEQILPD) is disordered.

It belongs to the TCP-1 chaperonin family. In terms of assembly, heterooligomeric complex of about 850 to 900 kDa that forms two stacked rings, 12 to 16 nm in diameter. Interacts with CCT8.

It is found in the cytoplasm. Functionally, molecular chaperone; assists the folding of proteins upon ATP hydrolysis. Known to play a role, in vitro, in the folding of actin and tubulin. The protein is T-complex protein 1 subunit gamma of Arabidopsis thaliana (Mouse-ear cress).